Reading from the N-terminus, the 669-residue chain is Dynamin-related protein 4C (669 aa).

A disordered region spans residues Met-1–Lys-21. In terms of domain architecture, Dynamin-type G spans Gly-62 to Pro-323. Residues Gly-72 to Ser-79 are G1 motif. Residue Gly-72 to Ser-79 coordinates GTP. Residues Cys-97–Arg-99 are G2 motif. The segment at Asp-171 to Gly-174 is G3 motif. GTP is bound by residues Asp-171–Ile-175 and Thr-240–Asp-243. The interval Thr-240–Asp-243 is G4 motif. Position 273 (Glu-273) is a region of interest, G5 motif. A GED domain is found at Ala-575–Cys-669.

Belongs to the TRAFAC class dynamin-like GTPase superfamily. Dynamin/Fzo/YdjA family.

It localises to the cytoplasm. It is found in the cytoskeleton. Putative microtubule-associated force-producing protein, able to bind and hydrolyze GTP. The chain is Dynamin-related protein 4C (DRP4C) from Arabidopsis thaliana (Mouse-ear cress).